A 220-amino-acid chain; its full sequence is Protein GrpE (220 aa).

Polar residues-rich tracts occupy residues 1 to 12 and 50 to 63; these read MEQGDKQATYNE and AAST…QTSV. The segment at 1-67 is disordered; it reads MEQGDKQATY…AEQTSVEAEE (67 aa).

The protein belongs to the GrpE family. As to quaternary structure, homodimer.

It localises to the cytoplasm. In terms of biological role, participates actively in the response to hyperosmotic and heat shock by preventing the aggregation of stress-denatured proteins, in association with DnaK and GrpE. It is the nucleotide exchange factor for DnaK and may function as a thermosensor. Unfolded proteins bind initially to DnaJ; upon interaction with the DnaJ-bound protein, DnaK hydrolyzes its bound ATP, resulting in the formation of a stable complex. GrpE releases ADP from DnaK; ATP binding to DnaK triggers the release of the substrate protein, thus completing the reaction cycle. Several rounds of ATP-dependent interactions between DnaJ, DnaK and GrpE are required for fully efficient folding. This chain is Protein GrpE, found in Geobacillus thermodenitrificans (strain NG80-2).